A 319-amino-acid chain; its full sequence is Cytochrome c biogenesis protein CcsA (319 aa).

7 consecutive transmembrane segments (helical) span residues 9–29, 44–64, 71–91, 143–163, 225–245, 259–273, and 286–306; these read ILTHISFSLVSIGITIFLITL, GVIGTFLCITGLLVTRWAYSG, LYESLLFLSWSFAIIHMFPYL, MVLGYAALLCGSLLSVALLVI, IISLGFIFLTIGILSGAVWAN, TWAFITWTMFAIYLH, and AIVAFLGFIIIWICYFGVNLL.

Belongs to the CcmF/CycK/Ccl1/NrfE/CcsA family. As to quaternary structure, may interact with Ccs1.

It localises to the plastid. The protein resides in the chloroplast thylakoid membrane. Its function is as follows. Required during biogenesis of c-type cytochromes (cytochrome c6 and cytochrome f) at the step of heme attachment. This Oenothera argillicola (Appalachian evening primrose) protein is Cytochrome c biogenesis protein CcsA.